We begin with the raw amino-acid sequence, 181 residues long: Early E3 20.3 kDa glycoprotein (181 aa).

N-linked (GlcNAc...) asparagine; by host glycans are attached at residues asparagine 29, asparagine 57, asparagine 70, and asparagine 75.

This sequence belongs to the adenoviridae E3_20 family.

E3 proteins seem to be dispensable for virus growth in tissue culture cells. They are potentially important for virus growth under special conditions; E3 region may help adenoviruses to evade the immune surveillance of the host. This chain is Early E3 20.3 kDa glycoprotein, found in Human adenovirus B serotype 11 (strain Slobiski) (HAdV-11).